We begin with the raw amino-acid sequence, 388 residues long: Homeobox protein XHOX-3 (388 aa).

2 disordered regions span residues 30-109 and 131-163; these read AVGS…SDFY and SAGQ…FSAC. Polar residues-rich tracts occupy residues 68-81 and 91-103; these read ATGQ…QLRI and DSLS…SSSD. Residues 168-227 constitute a DNA-binding region (homeobox); the sequence is MRRYRTAFTREQIARLEKEFYRENYVSRPRRCELAAALNLPETTIKVWFQNRRMKDKRQR.

The protein belongs to the even-skipped homeobox family.

Its subcellular location is the nucleus. May be required for posterior development and development of normal embryonic axial pattern. The sequence is that of Homeobox protein XHOX-3 (xhox3) from Xenopus laevis (African clawed frog).